Here is a 58-residue protein sequence, read N- to C-terminus: Ribulose bisphosphate carboxylase large chain (58 aa).

The propeptide occupies 1-2 (MS). At Pro-3 the chain carries N-acetylproline. An N6,N6,N6-trimethyllysine modification is found at Lys-14.

The protein belongs to the RuBisCO large chain family. Type I subfamily. In terms of assembly, heterohexadecamer of 8 large chains and 8 small chains.

The protein localises to the plastid. It is found in the chloroplast. It catalyses the reaction 2 (2R)-3-phosphoglycerate + 2 H(+) = D-ribulose 1,5-bisphosphate + CO2 + H2O. The enzyme catalyses D-ribulose 1,5-bisphosphate + O2 = 2-phosphoglycolate + (2R)-3-phosphoglycerate + 2 H(+). RuBisCO catalyzes two reactions: the carboxylation of D-ribulose 1,5-bisphosphate, the primary event in carbon dioxide fixation, as well as the oxidative fragmentation of the pentose substrate in the photorespiration process. Both reactions occur simultaneously and in competition at the same active site. This Rosa damascena (Damask rose) protein is Ribulose bisphosphate carboxylase large chain (rbcL).